The following is a 172-amino-acid chain: Shikimate kinase (172 aa).

11 to 16 (GAGKST) provides a ligand contact to ATP. Position 15 (S15) interacts with Mg(2+). Substrate is bound by residues D33, R57, and G79. An ATP-binding site is contributed by R117. R136 contributes to the substrate binding site. R153 contacts ATP.

It belongs to the shikimate kinase family. In terms of assembly, monomer. Mg(2+) serves as cofactor.

Its subcellular location is the cytoplasm. It catalyses the reaction shikimate + ATP = 3-phosphoshikimate + ADP + H(+). Its pathway is metabolic intermediate biosynthesis; chorismate biosynthesis; chorismate from D-erythrose 4-phosphate and phosphoenolpyruvate: step 5/7. Its function is as follows. Catalyzes the specific phosphorylation of the 3-hydroxyl group of shikimic acid using ATP as a cosubstrate. The protein is Shikimate kinase of Pseudomonas paraeruginosa (strain DSM 24068 / PA7) (Pseudomonas aeruginosa (strain PA7)).